The following is a 154-amino-acid chain: Protein disulfide-isomerase LQY1, chloroplastic (154 aa).

The transit peptide at 1–43 (MPVSAPSPPRLHSPFIHCPINFTPSSFSARNLRSPSTSYPRIK) directs the protein to the chloroplast. Residues 51-71 (VVAISVGVASVALGIGIPVFY) traverse the membrane as a helical segment. The CR-type zinc finger occupies 77-147 (NAAKRENTQP…SGVQPRYLDR (71 aa)). Cysteine 87, cysteine 90, cysteine 98, cysteine 101, cysteine 121, cysteine 124, cysteine 132, and cysteine 135 together coordinate Zn(2+).

It belongs to the BSD2 chaperone family. In terms of assembly, interacts with the photosystem II core subunits. Interacts with HHL1. Zn(2+) serves as cofactor.

The protein localises to the plastid. The protein resides in the chloroplast thylakoid membrane. It carries out the reaction Catalyzes the rearrangement of -S-S- bonds in proteins.. In terms of biological role, protein disulfide-isomerase probably involved upon formation of a complex with HHL1 in maintaining photosystem II (PSII) activity under high light by regulating repair and reassembly of PSII complexes. This is Protein disulfide-isomerase LQY1, chloroplastic from Arabidopsis thaliana (Mouse-ear cress).